The primary structure comprises 379 residues: Mannitol-1-phosphate 5-dehydrogenase (379 aa).

3-14 is a binding site for NAD(+); it reads ALHFGAGNIGRG.

Belongs to the mannitol dehydrogenase family.

It catalyses the reaction D-mannitol 1-phosphate + NAD(+) = beta-D-fructose 6-phosphate + NADH + H(+). This Actinobacillus pleuropneumoniae serotype 5b (strain L20) protein is Mannitol-1-phosphate 5-dehydrogenase.